We begin with the raw amino-acid sequence, 196 residues long: MAYKTEHITQQLRAAREAQKMSQRELSARSGLTQSHISQIERGTMEPGLGSLVDVARALDLEIVLAPKKLMPAIRNILDSASASSDVLTSDQRKLVGRLERWFAQHRGGFGSASEADTFKDSLALLRHLPLSAEEMDTFNEATARLDRSQADPPSRQELSRIAHAVRHLRNAAVHRDRDDAVPRSAYALDEEDDNA.

The HTH cro/C1-type domain maps to 12–66 (LRAAREAQKMSQRELSARSGLTQSHISQIERGTMEPGLGSLVDVARALDLEIVLA). The segment at residues 23–42 (QRELSARSGLTQSHISQIER) is a DNA-binding region (H-T-H motif). Residues 174–196 (VHRDRDDAVPRSAYALDEEDDNA) form a disordered region.

This is an uncharacterized protein from Sinorhizobium fredii (strain NBRC 101917 / NGR234).